Here is a 734-residue protein sequence, read N- to C-terminus: Phosphoribosylformylglycinamidine synthase subunit PurL (734 aa).

H49 is an active-site residue. 2 residues coordinate ATP: Y52 and K91. Position 93 (E93) interacts with Mg(2+). Substrate contacts are provided by residues 94 to 97 (SHNH) and R116. Residue H95 is the Proton acceptor of the active site. D117 lines the Mg(2+) pocket. Substrate is bound at residue Q240. D268 is a binding site for Mg(2+). Position 312-314 (312-314 (ESQ)) interacts with substrate. ATP-binding residues include D491 and G528. A Mg(2+)-binding site is contributed by N529. Residue S531 coordinates substrate.

It belongs to the FGAMS family. Monomer. Part of the FGAM synthase complex composed of 1 PurL, 1 PurQ and 2 PurS subunits.

The protein resides in the cytoplasm. It carries out the reaction N(2)-formyl-N(1)-(5-phospho-beta-D-ribosyl)glycinamide + L-glutamine + ATP + H2O = 2-formamido-N(1)-(5-O-phospho-beta-D-ribosyl)acetamidine + L-glutamate + ADP + phosphate + H(+). It participates in purine metabolism; IMP biosynthesis via de novo pathway; 5-amino-1-(5-phospho-D-ribosyl)imidazole from N(2)-formyl-N(1)-(5-phospho-D-ribosyl)glycinamide: step 1/2. Its function is as follows. Part of the phosphoribosylformylglycinamidine synthase complex involved in the purines biosynthetic pathway. Catalyzes the ATP-dependent conversion of formylglycinamide ribonucleotide (FGAR) and glutamine to yield formylglycinamidine ribonucleotide (FGAM) and glutamate. The FGAM synthase complex is composed of three subunits. PurQ produces an ammonia molecule by converting glutamine to glutamate. PurL transfers the ammonia molecule to FGAR to form FGAM in an ATP-dependent manner. PurS interacts with PurQ and PurL and is thought to assist in the transfer of the ammonia molecule from PurQ to PurL. This chain is Phosphoribosylformylglycinamidine synthase subunit PurL, found in Zymomonas mobilis subsp. mobilis (strain ATCC 31821 / ZM4 / CP4).